The chain runs to 434 residues: Mothers against decapentaplegic homolog 9 (434 aa).

An MH1 domain is found at 16–140 (PAVKRLLGWK…YRRVETPVLP (125 aa)). The Zn(2+) site is built by Cys-68, Cys-113, Cys-125, and His-130. The interval 171-222 (MPHNATYPDSFQQSLGPAPPSSPGHVFPQSPCPTSYPQSPGSPSESDSPYQH) is disordered. Residues 202–221 (CPTSYPQSPGSPSESDSPYQ) show a composition bias toward polar residues. Positions 236–434 (WCSVAYYELN…SPHNPISSVS (199 aa)) constitute an MH2 domain.

It belongs to the dwarfin/SMAD family. As to quaternary structure, interaction with the co-SMAD SMAD4. Interacts with PEBP2-alpha subunit. Interacts with RANBP3L. Post-translationally, phosphorylated on serine by BMP (bone morphogenetic proteins) type 1 receptor kinase. Phosphorylated by activin type I receptor-like kinase-2 (ALK-2).

The protein resides in the cytoplasm. It is found in the nucleus. In terms of biological role, transcriptional modulator activated by BMP (bone morphogenetic proteins) type 1 receptor kinase. SMAD9 is a receptor-regulated SMAD (R-SMAD). Has been shown to be activated by activin type I receptor-like kinase-2 (ALK-2) which stimulates heteromerization between SMAD9 and SMAD4. ALK-2 binds TGF-beta, activin and BMP. This is Mothers against decapentaplegic homolog 9 (Smad9) from Rattus norvegicus (Rat).